We begin with the raw amino-acid sequence, 226 residues long: ADP-ribosylation factor-like protein 6-interacting protein 6 (226 aa).

A disordered region spans residues 1–49 (MSFVESWRFAGARRRRQVTPGPATRPGYSDYTQGDSWGEGEGDEDEGCD). Phosphoserine is present on residues Ser-2 and Ser-36. The span at 38–48 (GEGEGDEDEGC) shows a compositional bias: acidic residues. Ser-60, Ser-65, and Ser-80 each carry phosphoserine. Helical transmembrane passes span 111-131 (ILCSLLFAVLLAFLLAIAYMI), 150-170 (LLGFWSLLIISLTAGLSCCSF), and 205-225 (MGYSMAILNGIVAALTVAWCL).

It belongs to the ARL6IP6 family.

It is found in the nucleus inner membrane. The protein is ADP-ribosylation factor-like protein 6-interacting protein 6 (Arl6ip6) of Mus musculus (Mouse).